We begin with the raw amino-acid sequence, 490 residues long: MLTNIIILIILYLFYDFCYKNFKYRNYGSPWALPVIGHFIHVINQPHLVVHNDRMKYNNGRFVNYWFGDYLSIAITDPILYKKIYLNFPKQINSRLKSPTVLNISERFRGIISSNENNWDFHHGILSKLFNGHKAKINNFLFEKETKFIIEYMKKISKSGENFDTRSNFLYFYSNILFDYILGKRVENIYENELRKDRKKFMVSIQEVMDSVGLIKFLNYLILSYPFLSIYLRYFTYTTFNLKKILKQYYDEHLETIDLNKPRDVLDNLIMEYKNQNAIECDKSFVAIAIELLAAGTDTNSSTSEWFLTYLVNNPIYQDKIYDELIGALKINKPLKGSDVLINLSHRPLTPLFNATLKEVLRLIPATPFSVPRMSNEGFEVDGIKIPKGTYLFPSMYSIFRDEKYWGENANKFYPERFLTDSHSNNYFPYGVGKRMCLGSNFSQHELYICLTNIVLNFKIKSIDGKPLNEIPNYGITFRPNIFEVKLENR.

A helical transmembrane segment spans residues 2 to 22 (LTNIIILIILYLFYDFCYKNF). Cysteine 437 serves as a coordination point for heme.

This sequence belongs to the cytochrome P450 family. Requires heme as cofactor.

It localises to the membrane. The chain is Probable cytochrome P450 518B1 (cyp518B1) from Dictyostelium discoideum (Social amoeba).